The following is a 354-amino-acid chain: Neutral protease 2 homolog MEP3 (354 aa).

The first 19 residues, 1–19, serve as a signal peptide directing secretion; sequence MHFTSSLLALVALTTQALA. The propeptide occupies 20-179; the sequence is FPLNDLPKRD…QSAIPKLEKR (160 aa). Intrachain disulfides connect Cys186–Cys256 and Cys263–Cys281. His305 is a binding site for Zn(2+). Residue Glu306 is part of the active site. Positions 309 and 320 each coordinate Zn(2+).

It belongs to the peptidase M35 family. The cofactor is Zn(2+).

Its subcellular location is the secreted. The enzyme catalyses Preferential cleavage of bonds with hydrophobic residues in P1'. Also 3-Asn-|-Gln-4 and 8-Gly-|-Ser-9 bonds in insulin B chain.. Its function is as follows. Secreted metalloproteinase that allows assimilation of proteinaceous substrates. Shows high activities on basic nuclear substrates such as histone and protamine. May be involved in virulence. The polypeptide is Neutral protease 2 homolog MEP3 (MEP3) (Coccidioides posadasii (strain C735) (Valley fever fungus)).